The sequence spans 216 residues: 3-keto-L-gulonate-6-phosphate decarboxylase UlaD (216 aa).

Asp11 contacts substrate. Glu33 and Asp62 together coordinate Mg(2+). Position 192 (Arg192) interacts with substrate.

This sequence belongs to the HPS/KGPDC family. KGPDC subfamily. Homodimer. Mg(2+) is required as a cofactor.

The enzyme catalyses 3-dehydro-L-gulonate 6-phosphate + H(+) = L-xylulose 5-phosphate + CO2. Its pathway is cofactor degradation; L-ascorbate degradation; D-xylulose 5-phosphate from L-ascorbate: step 2/4. Functionally, catalyzes the decarboxylation of 3-keto-L-gulonate-6-P into L-xylulose-5-P. Is involved in the anaerobic L-ascorbate utilization. This is 3-keto-L-gulonate-6-phosphate decarboxylase UlaD from Shigella dysenteriae serotype 1 (strain Sd197).